We begin with the raw amino-acid sequence, 380 residues long: MTLIEEILGGKSGESVVRRVDLVYAHDGTMPLIIEAFNKVFATVRARAYIFFDHVYPAPTVKIANLQKEIRDFAKRHRIPVIEGQGISHQLVVEMGLTENSKIVVGADSHTPTLGALGVFAVGMGATDVAVILGLGKTWFRIPESVGVILEGNPSRYVMATDVILHLLSLLKDYDMNYRAVEFFNVPFSLDERLTLTNFVVEANAKTGIIGEEYTGDGYVKELEIELNSLNPLVAKPHNPANVVPVEEVEGTKIDQVFIGSCTNGRFEQISKAAEILEGEKVAVRTIVGPASMNVYKRMIEEGVARKLIEAGAVILPPGCGPCLGRHMGVVGDGEIVLSTTNRNFRGRMGSPNAQIYLSNPITAAVSALYGEITNPEGAI.

[4Fe-4S] cluster is bound by residues cysteine 262, cysteine 320, and cysteine 323.

The protein belongs to the aconitase/IPM isomerase family. LeuC type 2 subfamily. As to quaternary structure, heterodimer of LeuC and LeuD. It depends on [4Fe-4S] cluster as a cofactor.

It carries out the reaction (2R,3S)-3-isopropylmalate = (2S)-2-isopropylmalate. The protein operates within amino-acid biosynthesis; L-leucine biosynthesis; L-leucine from 3-methyl-2-oxobutanoate: step 2/4. In terms of biological role, catalyzes the isomerization between 2-isopropylmalate and 3-isopropylmalate, via the formation of 2-isopropylmaleate. This Pyrococcus furiosus (strain ATCC 43587 / DSM 3638 / JCM 8422 / Vc1) protein is 3-isopropylmalate dehydratase large subunit 2.